Reading from the N-terminus, the 210-residue chain is Glutathione S-transferase P 2 (210 aa).

The 82-residue stretch at 1–82 (SGYTLTYFPL…LLARYGLSGS (82 aa)) folds into the GST N-terminal domain. Residues Tyr7, Arg13, Trp38, Lys46, 53–54 (QI), and 66–67 (QS) each bind glutathione. The 122-residue stretch at 83 to 204 (NEREIAINEM…KSEGRKRRPI (122 aa)) folds into the GST C-terminal domain.

The protein belongs to the GST superfamily. Pi family. Homodimer. Liver, kidney, muscle, skin, lung and ovary.

The catalysed reaction is RX + glutathione = an S-substituted glutathione + a halide anion + H(+). Conjugation of reduced glutathione to a wide number of exogenous and endogenous hydrophobic electrophiles. The protein is Glutathione S-transferase P 2 of Bufo bufo (European toad).